The sequence spans 955 residues: uncharacterized protein (955 aa).

The signal sequence occupies residues 1 to 24 (MQSSLIKILGVLAIVATLVCFVFA). The segment at 127 to 146 (STRPGKSNLDDNGKMIPIPR) is disordered. 6 helical membrane passes run 597-617 (IKAL…LGFA), 707-727 (LGLS…IVII), 739-759 (AFMA…FLLF), 781-801 (VVLM…LDFV), 818-838 (FIGT…INWF), and 857-877 (IVAL…SGNM). A disordered region spans residues 905-955 (LSQVGMDEKTRKGITGRAKERLKQRNETLKQAEKTRKNAPKEEPPKAEIPK). Positions 910-955 (MDEKTRKGITGRAKERLKQRNETLKQAEKTRKNAPKEEPPKAEIPK) are enriched in basic and acidic residues.

This sequence belongs to the TrbL/VirB6 family.

The protein resides in the cell membrane. This is an uncharacterized protein from Rickettsia bellii (strain RML369-C).